Here is a 246-residue protein sequence, read N- to C-terminus: Neurotrophic factor BDNF precursor form (246 aa).

An N-terminal signal peptide occupies residues methionine 1–alanine 18. Residues alanine 19–arginine 127 constitute a propeptide that is removed on maturation. Residue asparagine 120 is glycosylated (N-linked (GlcNAc...) asparagine). 3 disulfide bridges follow: cysteine 140-cysteine 207, cysteine 185-cysteine 236, and cysteine 195-cysteine 238.

Belongs to the NGF-beta family.

The protein localises to the secreted. Its function is as follows. Important signaling molecule that activates signaling cascades downstream of NTRK2. During development, promotes the survival and differentiation of selected neuronal populations of the peripheral and central nervous systems. Participates in axonal growth, pathfinding and in the modulation of dendritic growth and morphology. Major regulator of synaptic transmission and plasticity at adult synapses in many regions of the CNS. The versatility of BDNF is emphasized by its contribution to a range of adaptive neuronal responses including long-term potentiation (LTP), long-term depression (LTD), certain forms of short-term synaptic plasticity, as well as homeostatic regulation of intrinsic neuronal excitability. This Gallus gallus (Chicken) protein is Neurotrophic factor BDNF precursor form (BDNF).